Consider the following 265-residue polypeptide: Glycine/sarcosine N-methyltransferase (265 aa).

Residues Tyr-28, Trp-36, Arg-45, Ala-69, Asp-90, 116-117, and Leu-134 each bind S-adenosyl-L-methionine; that span reads DW. Substrate-binding residues include Asn-136, Arg-169, and Tyr-208.

The protein belongs to the class I-like SAM-binding methyltransferase superfamily. Glycine N-methyltransferase family. Monomer.

It catalyses the reaction glycine + 2 S-adenosyl-L-methionine = N,N-dimethylglycine + 2 S-adenosyl-L-homocysteine + 2 H(+). It carries out the reaction glycine + S-adenosyl-L-methionine = sarcosine + S-adenosyl-L-homocysteine + H(+). The catalysed reaction is sarcosine + S-adenosyl-L-methionine = N,N-dimethylglycine + S-adenosyl-L-homocysteine + H(+). It participates in amine and polyamine biosynthesis; betaine biosynthesis via glycine pathway; betaine from glycine: step 1/3. It functions in the pathway amine and polyamine biosynthesis; betaine biosynthesis via glycine pathway; betaine from glycine: step 2/3. With respect to regulation, inhibited by acetate, dimethylglycine and S-adenosyl-L-homocysteine. Functionally, catalyzes the methylation of glycine and sarcosine to sarcosine and dimethylglycine, respectively, with S-adenosylmethionine (AdoMet) acting as the methyl donor. The polypeptide is Glycine/sarcosine N-methyltransferase (Aphanothece halophytica).